The sequence spans 479 residues: Ribosomal RNA small subunit methyltransferase F (479 aa).

S-adenosyl-L-methionine contacts are provided by residues 125–131, glutamate 149, aspartate 176, and aspartate 194; that span reads AAAPGSK. The Nucleophile role is filled by cysteine 247.

The protein belongs to the class I-like SAM-binding methyltransferase superfamily. RsmB/NOP family.

The protein resides in the cytoplasm. The catalysed reaction is cytidine(1407) in 16S rRNA + S-adenosyl-L-methionine = 5-methylcytidine(1407) in 16S rRNA + S-adenosyl-L-homocysteine + H(+). Specifically methylates the cytosine at position 1407 (m5C1407) of 16S rRNA. This chain is Ribosomal RNA small subunit methyltransferase F, found in Salmonella agona (strain SL483).